A 944-amino-acid chain; its full sequence is Isoleucine--tRNA ligase (944 aa).

The 'HIGH' region signature appears at 58–68; that stretch reads PYANGSIHIGH. Residue Glu-563 coordinates L-isoleucyl-5'-AMP. The 'KMSKS' region signature appears at 604–608; sequence KMSKS. Residue Lys-607 coordinates ATP. Positions 907, 910, 927, and 930 each coordinate Zn(2+).

It belongs to the class-I aminoacyl-tRNA synthetase family. IleS type 1 subfamily. In terms of assembly, monomer. The cofactor is Zn(2+).

It is found in the cytoplasm. The catalysed reaction is tRNA(Ile) + L-isoleucine + ATP = L-isoleucyl-tRNA(Ile) + AMP + diphosphate. Its function is as follows. Catalyzes the attachment of isoleucine to tRNA(Ile). As IleRS can inadvertently accommodate and process structurally similar amino acids such as valine, to avoid such errors it has two additional distinct tRNA(Ile)-dependent editing activities. One activity is designated as 'pretransfer' editing and involves the hydrolysis of activated Val-AMP. The other activity is designated 'posttransfer' editing and involves deacylation of mischarged Val-tRNA(Ile). This chain is Isoleucine--tRNA ligase, found in Salmonella paratyphi A (strain ATCC 9150 / SARB42).